A 558-amino-acid chain; its full sequence is Potassium-transporting ATPase potassium-binding subunit (558 aa).

12 helical membrane-spanning segments follow: residues 1–21, 66–86, 127–147, 166–186, 245–265, 281–301, 327–347, 354–374, 377–397, 416–436, 482–502, and 531–551; these read MEIILFLTMMVMITYVFSGYL, FNGFMGFITFVLLIVQQWLFL, MIVMTYLMFTSSASGYAVCIA, IVRFIVRVLLPLSCLISILLM, IWSNFIEMGSMMLLPMSMLFL, ALILFVAMFFIFIAILTLTMW, FGAGLSALFTVITTAFTTGSV, LTPIGGLGPMVLMMLNVVFGG, VGLMNLLIFVLLTVFICSLMV, IVLVFLIHPILILVFSALAFM, ISTGIIMLLSRYIPIILQLMI, and IVFIVLLSGLTFIPVLLLGPI.

Belongs to the KdpA family. In terms of assembly, the system is composed of three essential subunits: KdpA, KdpB and KdpC.

It is found in the cell membrane. In terms of biological role, part of the high-affinity ATP-driven potassium transport (or Kdp) system, which catalyzes the hydrolysis of ATP coupled with the electrogenic transport of potassium into the cytoplasm. This subunit binds the extracellular potassium ions and delivers the ions to the membrane domain of KdpB through an intramembrane tunnel. This Staphylococcus aureus (strain USA300) protein is Potassium-transporting ATPase potassium-binding subunit.